We begin with the raw amino-acid sequence, 64 residues long: Large ribosomal subunit protein bL35 (64 aa).

This sequence belongs to the bacterial ribosomal protein bL35 family.

The polypeptide is Large ribosomal subunit protein bL35 (Streptomyces avermitilis (strain ATCC 31267 / DSM 46492 / JCM 5070 / NBRC 14893 / NCIMB 12804 / NRRL 8165 / MA-4680)).